The following is a 955-amino-acid chain: Iron-responsive element-binding protein 2 (955 aa).

The [4Fe-4S] cluster site is built by Cys504, Cys570, and Cys573.

The protein belongs to the aconitase/IPM isomerase family. The cofactor is [4Fe-4S] cluster. Ubiquitinated and degraded by the proteasome in presence of high level of iron and oxygen.

The protein localises to the cytoplasm. RNA-binding protein that binds to iron-responsive elements (IRES), which are stem-loop structures found in the 5'-UTR of ferritin, and delta aminolevulinic acid synthase mRNAs, and in the 3'-UTR of transferrin receptor mRNA. Binding to the IRE element in ferritin results in the repression of its mRNA translation. Binding of the protein to the transferrin receptor mRNA inhibits the degradation of this otherwise rapidly degraded mRNA. The protein is Iron-responsive element-binding protein 2 (ireb2) of Xenopus laevis (African clawed frog).